The primary structure comprises 529 residues: Bifunctional purine biosynthesis protein PurH (529 aa).

Positions 1–148 constitute an MGS-like domain; that stretch reads MQQRRPVRRA…KNHRDVAIVV (148 aa). Position 287 is an N6-acetyllysine (lysine 287).

This sequence belongs to the PurH family.

It catalyses the reaction (6R)-10-formyltetrahydrofolate + 5-amino-1-(5-phospho-beta-D-ribosyl)imidazole-4-carboxamide = 5-formamido-1-(5-phospho-D-ribosyl)imidazole-4-carboxamide + (6S)-5,6,7,8-tetrahydrofolate. It carries out the reaction IMP + H2O = 5-formamido-1-(5-phospho-D-ribosyl)imidazole-4-carboxamide. Its pathway is purine metabolism; IMP biosynthesis via de novo pathway; 5-formamido-1-(5-phospho-D-ribosyl)imidazole-4-carboxamide from 5-amino-1-(5-phospho-D-ribosyl)imidazole-4-carboxamide (10-formyl THF route): step 1/1. It functions in the pathway purine metabolism; IMP biosynthesis via de novo pathway; IMP from 5-formamido-1-(5-phospho-D-ribosyl)imidazole-4-carboxamide: step 1/1. This is Bifunctional purine biosynthesis protein PurH from Escherichia coli O6:K15:H31 (strain 536 / UPEC).